Reading from the N-terminus, the 123-residue chain is Large-conductance mechanosensitive channel (123 aa).

A run of 2 helical transmembrane segments spans residues 14-34 (VLDL…VTSL) and 67-87 (GNFI…FLLV).

This sequence belongs to the MscL family. As to quaternary structure, homopentamer.

The protein resides in the cell membrane. Functionally, channel that opens in response to stretch forces in the membrane lipid bilayer. May participate in the regulation of osmotic pressure changes within the cell. The sequence is that of Large-conductance mechanosensitive channel from Lacticaseibacillus casei (strain BL23) (Lactobacillus casei).